Consider the following 198-residue polypeptide: Syndecan-4 (198 aa).

A signal peptide spans 1 to 18 (MAPARLFALLLLFVGGVA). Residues 19 to 145 (ESIRETEVID…QGSNIFERTE (127 aa)) lie on the Extracellular side of the membrane. O-linked (Xyl...) (glycosaminoglycan) serine glycans are attached at residues Ser-39, Ser-61, and Ser-63. A glycan (O-linked (Xyl...) (chondroitin sulfate) serine) is linked at Ser-95. The chain crosses the membrane as a helical span at residues 146-170 (VLAALIVGGIVGILFAVFLILLLMY). At 171–198 (RMKKKDEGSYDLGKKPIYKKAPTNEFYA) the chain is on the cytoplasmic side.

Belongs to the syndecan proteoglycan family. In terms of assembly, homodimer. Interacts with CDCP1 and SDCBP. Interacts (via its cytoplasmic domain) with GIPC (via its PDZ domain). Interacts (via its cytoplasmic domain) with NUDT16L1. Interacts with DNM2; this interaction is markedly enhanced at focal ahesion site upon induction of focal adhesions and stress-fiber formation. In terms of processing, shedding is enhanced by a number of factors such as heparanase, thrombin or EGF. Also by stress and wound healing. PMA-mediated shedding is inhibited by TIMP3. O-glycosylated; contains both chondroitin sulfate and heparan sulfate. Ser-39, Ser-61 and Ser-63 can all be modified by either chondroitin sulfate or heparan sulfate, and the protein exists in forms that contain only chondroitin sulfate, only heparan sulfate and both chondroitin sulfate and heparan sulfate.

The protein localises to the membrane. The protein resides in the secreted. Cell surface proteoglycan which regulates exosome biogenesis in concert with SDCBP and PDCD6IP. The polypeptide is Syndecan-4 (Pongo abelii (Sumatran orangutan)).